A 273-amino-acid polypeptide reads, in one-letter code: Dermonecrotic toxin LspaSicTox-alphaIA1iii (273 aa).

The active site involves histidine 5. Residues glutamate 25 and aspartate 27 each coordinate Mg(2+). Residue histidine 41 is the Nucleophile of the active site. 2 disulfides stabilise this stretch: cysteine 45-cysteine 51 and cysteine 47-cysteine 190. Aspartate 85 provides a ligand contact to Mg(2+).

The protein belongs to the arthropod phospholipase D family. Class II subfamily. Requires Mg(2+) as cofactor. Expressed by the venom gland.

The protein resides in the secreted. It carries out the reaction an N-(acyl)-sphingosylphosphocholine = an N-(acyl)-sphingosyl-1,3-cyclic phosphate + choline. The enzyme catalyses an N-(acyl)-sphingosylphosphoethanolamine = an N-(acyl)-sphingosyl-1,3-cyclic phosphate + ethanolamine. It catalyses the reaction a 1-acyl-sn-glycero-3-phosphocholine = a 1-acyl-sn-glycero-2,3-cyclic phosphate + choline. The catalysed reaction is a 1-acyl-sn-glycero-3-phosphoethanolamine = a 1-acyl-sn-glycero-2,3-cyclic phosphate + ethanolamine. Dermonecrotic toxins cleave the phosphodiester linkage between the phosphate and headgroup of certain phospholipids (sphingolipid and lysolipid substrates), forming an alcohol (often choline) and a cyclic phosphate. This toxin acts on sphingomyelin (SM). It may also act on ceramide phosphoethanolamine (CPE), lysophosphatidylcholine (LPC) and lysophosphatidylethanolamine (LPE), but not on lysophosphatidylserine (LPS), and lysophosphatidylglycerol (LPG). It acts by transphosphatidylation, releasing exclusively cyclic phosphate products as second products. Induces dermonecrosis, hemolysis, increased vascular permeability, edema, inflammatory response, and platelet aggregation. The chain is Dermonecrotic toxin LspaSicTox-alphaIA1iii from Loxosceles spadicea (Recluse spider).